We begin with the raw amino-acid sequence, 24 residues long: Neurotoxin 5 (24 aa).

Residues 2-24 enclose the LCN-type CS-alpha/beta domain; the sequence is RDAYIAQNYNCVYTCFKNDYCND.

Belongs to the long (4 C-C) scorpion toxin superfamily. Sodium channel inhibitor family. Alpha subfamily. As to expression, expressed by the venom gland.

It localises to the secreted. Binds to sodium channels (Nav) and inhibits the inactivation of the activated channels, thereby blocking neuronal transmission. This Buthus occitanus tunetanus (Common European scorpion) protein is Neurotoxin 5.